The sequence spans 227 residues: Germin-like protein 3-5 (227 aa).

A signal peptide spans 1–29 (MEYGFKAAGLVFVVLLLQQAPVLIRATDA). The cysteines at positions 36 and 51 are disulfide-linked. Residues 65–217 (SKIATGGDVN…ALRVDAGVVE (153 aa)) form the Cupin type-1 domain. N-linked (GlcNAc...) asparagine glycosylation is found at Asn78 and Asn81. Mn(2+) is bound by residues His114, His116, Glu121, and His163.

This sequence belongs to the germin family. As to quaternary structure, oligomer (believed to be a pentamer but probably hexamer).

It localises to the secreted. The protein resides in the extracellular space. It is found in the apoplast. In terms of biological role, may play a role in plant defense. Probably has no oxalate oxidase activity even if the active site is conserved. This chain is Germin-like protein 3-5, found in Oryza sativa subsp. japonica (Rice).